A 461-amino-acid chain; its full sequence is Probable tubulin polyglutamylase TTLL9 (461 aa).

Over residues 1 to 10 (MSRQKNQNSK) the composition is skewed to polar residues. The segment at 1–20 (MSRQKNQNSKGHGVSKGKER) is disordered. The TTL domain occupies 22-402 (QRTLIRFKTT…EARLTGKEKR (381 aa)). ATP is bound by residues K149 and 155–156 (QG). Q155 lines the a protein pocket. The segment at 172–208 (RKGTSGKKPTGVETQPARANMNPSGSHDTRSSDDQKD) is disordered. Positions 198–208 (HDTRSSDDQKD) are enriched in basic and acidic residues. Residues 218–221 (QRYV) and 231–233 (KFD) each bind ATP. Residue R257 participates in L-glutamate binding. An ATP-binding site is contributed by 276-277 (TN). K294 lines the L-glutamate pocket. Mg(2+)-binding residues include D348, E361, and N363. L-glutamate is bound at residue K379.

Belongs to the tubulin--tyrosine ligase family. Requires Mg(2+) as cofactor. In terms of tissue distribution, highly expressed in brain and testis. Expressed in heart, kidney and lung. In the brain, expressed in ependymal cilia, cortex, corpus callosum and striatum. In the testis, specifically expressed in the seminiferous tubules.

It localises to the cytoplasm. The protein localises to the cytoskeleton. Its subcellular location is the cilium basal body. The protein resides in the flagellum axoneme. It catalyses the reaction (L-glutamyl)(n)-gamma-L-glutamyl-L-glutamyl-[protein] + L-glutamate + ATP = (L-glutamyl)(n+1)-gamma-L-glutamyl-L-glutamyl-[protein] + ADP + phosphate + H(+). In terms of biological role, probable tubulin polyglutamylase that generates side chains of glutamate on the gamma-carboxyl group of specific glutamate residues within the C-terminal tail of target proteins. Similar to TTLL1, may acquire enzymatic activity only in complex with other proteins as it is most likely lacking domains important for autonomous activity. Mediates tubulin polyglutamylation which induces establishment of microtubule heterogeneity in sperm flagella, thereby playing a role in normal motile flagella axoneme structure and sperm flagella beating pattern. This is Probable tubulin polyglutamylase TTLL9 from Mus musculus (Mouse).